A 162-amino-acid chain; its full sequence is UPF0303 protein Arad_3071 (162 aa).

Belongs to the UPF0303 family.

In Rhizobium rhizogenes (strain K84 / ATCC BAA-868) (Agrobacterium radiobacter), this protein is UPF0303 protein Arad_3071.